The primary structure comprises 449 residues: Exodeoxyribonuclease 7 large subunit (449 aa).

The protein belongs to the XseA family. Heterooligomer composed of large and small subunits.

The protein localises to the cytoplasm. The enzyme catalyses Exonucleolytic cleavage in either 5'- to 3'- or 3'- to 5'-direction to yield nucleoside 5'-phosphates.. Functionally, bidirectionally degrades single-stranded DNA into large acid-insoluble oligonucleotides, which are then degraded further into small acid-soluble oligonucleotides. This Aliivibrio fischeri (strain ATCC 700601 / ES114) (Vibrio fischeri) protein is Exodeoxyribonuclease 7 large subunit.